A 292-amino-acid polypeptide reads, in one-letter code: 4-hydroxy-tetrahydrodipicolinate synthase (292 aa).

T45 is a binding site for pyruvate. Y133 (proton donor/acceptor) is an active-site residue. K161 (schiff-base intermediate with substrate) is an active-site residue. I203 contributes to the pyruvate binding site.

This sequence belongs to the DapA family. In terms of assembly, homodimer.

It is found in the cytoplasm. It carries out the reaction L-aspartate 4-semialdehyde + pyruvate = (2S,4S)-4-hydroxy-2,3,4,5-tetrahydrodipicolinate + H2O + H(+). Its pathway is amino-acid biosynthesis; L-lysine biosynthesis via DAP pathway; (S)-tetrahydrodipicolinate from L-aspartate: step 3/4. Functionally, catalyzes the condensation of (S)-aspartate-beta-semialdehyde [(S)-ASA] and pyruvate to 4-hydroxy-tetrahydrodipicolinate (HTPA). The chain is 4-hydroxy-tetrahydrodipicolinate synthase from Stutzerimonas stutzeri (strain A1501) (Pseudomonas stutzeri).